The chain runs to 72 residues: MSKDDVIEVEGTVVEPLPNAMFRVELDNGHKVLAHVSGKIRMNFIRILPGDRVTVELSPYDLTRGRIIYRHK.

Positions 1–72 (MSKDDVIEVE…TRGRIIYRHK (72 aa)) constitute an S1-like domain.

The protein belongs to the IF-1 family. Component of the 30S ribosomal translation pre-initiation complex which assembles on the 30S ribosome in the order IF-2 and IF-3, IF-1 and N-formylmethionyl-tRNA(fMet); mRNA recruitment can occur at any time during PIC assembly.

Its subcellular location is the cytoplasm. Functionally, one of the essential components for the initiation of protein synthesis. Stabilizes the binding of IF-2 and IF-3 on the 30S subunit to which N-formylmethionyl-tRNA(fMet) subsequently binds. Helps modulate mRNA selection, yielding the 30S pre-initiation complex (PIC). Upon addition of the 50S ribosomal subunit IF-1, IF-2 and IF-3 are released leaving the mature 70S translation initiation complex. This is Translation initiation factor IF-1 from Carboxydothermus hydrogenoformans (strain ATCC BAA-161 / DSM 6008 / Z-2901).